Consider the following 721-residue polypeptide: Ribonuclease R (721 aa).

The region spanning 249-587 (RRSIIDREII…VHRLLWMFIF (339 aa)) is the RNB domain. The region spanning 639–719 (GKEFIGVVTT…LTRKIDFELV (81 aa)) is the S1 motif domain.

It belongs to the RNR ribonuclease family. RNase R subfamily.

Its subcellular location is the cytoplasm. It catalyses the reaction Exonucleolytic cleavage in the 3'- to 5'-direction to yield nucleoside 5'-phosphates.. Functionally, 3'-5' exoribonuclease that releases 5'-nucleoside monophosphates and is involved in maturation of structured RNAs. This Ureaplasma parvum serovar 3 (strain ATCC 700970) protein is Ribonuclease R.